The chain runs to 355 residues: Probable nitronate monooxygenase (355 aa).

FMN is bound by residues N71, Q175, G180, G218, and 237 to 240 (QMGT).

This sequence belongs to the nitronate monooxygenase family. NMO class I subfamily. FMN is required as a cofactor.

The catalysed reaction is 3 propionate 3-nitronate + 3 O2 + H2O = 3 3-oxopropanoate + 2 nitrate + nitrite + H2O2 + 3 H(+). Its function is as follows. Nitronate monooxygenase that uses molecular oxygen to catalyze the oxidative denitrification of alkyl nitronates. Acts on propionate 3-nitronate (P3N), the presumed physiological substrate. Probably functions in the detoxification of P3N, a metabolic poison produced by plants and fungi as a defense mechanism. The protein is Probable nitronate monooxygenase of Staphylococcus aureus (strain JH1).